Reading from the N-terminus, the 309-residue chain is MKDILIIAGPTAVGKTDISIKIAQKMNGEIISADSMQIYKYMDIGSAKVTKEEMKGIKHHLIDVVDPSEEFSVASFKKMAQNAIDDITSRKKYPIIVGGTGLYINSLICNYDFTGAYKDEAYRESLQAIAKDKGKEYLHEKLKNIDIDSYKKLYPNDLKRVIRALEVYKITGKTISELNSNVDLYDIPYNIHYFILNMDRQKLYERINLRVDIMLRNGLVDEVIKLRDMGYNSNMQSMKGIGYKEILSYLEGCITLEEAVELIKKGSRHYAKRQLTWFRKDERAVWINKDIYKNDDDIVFKILSSIEEI.

Residue 9–16 participates in ATP binding; the sequence is GPTAVGKT. 11–16 lines the substrate pocket; it reads TAVGKT. Residues 34 to 37 form an interaction with substrate tRNA region; sequence DSMQ.

This sequence belongs to the IPP transferase family. In terms of assembly, monomer. The cofactor is Mg(2+).

The catalysed reaction is adenosine(37) in tRNA + dimethylallyl diphosphate = N(6)-dimethylallyladenosine(37) in tRNA + diphosphate. In terms of biological role, catalyzes the transfer of a dimethylallyl group onto the adenine at position 37 in tRNAs that read codons beginning with uridine, leading to the formation of N6-(dimethylallyl)adenosine (i(6)A). The sequence is that of tRNA dimethylallyltransferase from Clostridium acetobutylicum (strain ATCC 824 / DSM 792 / JCM 1419 / IAM 19013 / LMG 5710 / NBRC 13948 / NRRL B-527 / VKM B-1787 / 2291 / W).